A 434-amino-acid polypeptide reads, in one-letter code: Mitochondrial distribution and morphology protein 12 (434 aa).

An SMP-LTD domain is found at 1-434 (MSIDIDWERA…VYPSFWTFLV (434 aa)). Positions 70 to 83 (YEEDDNENFSESSE) are enriched in acidic residues. Disordered stretches follow at residues 70–141 (YEED…LRSP) and 181–277 (TPLG…LPPR). Over residues 86–97 (SPTREPVDRYGS) the composition is skewed to basic and acidic residues. The segment covering 215 to 237 (SAQSRPSTANTGNTLLSRGSMSS) has biased composition (polar residues).

Belongs to the MDM12 family. In terms of assembly, component of the ER-mitochondria encounter structure (ERMES) or MDM complex, composed of MMM1, MDM10, MDM12 and MDM34. An MMM1 homodimer associates with one molecule of MDM12 on each side in a pairwise head-to-tail manner, and the SMP-LTD domains of MMM1 and MDM12 generate a continuous hydrophobic tunnel for phospholipid trafficking.

The protein resides in the mitochondrion outer membrane. It is found in the endoplasmic reticulum membrane. Functionally, component of the ERMES/MDM complex, which serves as a molecular tether to connect the endoplasmic reticulum (ER) and mitochondria. Components of this complex are involved in the control of mitochondrial shape and protein biogenesis, and function in nonvesicular lipid trafficking between the ER and mitochondria. MDM12 is required for the interaction of the ER-resident membrane protein MMM1 and the outer mitochondrial membrane-resident beta-barrel protein MDM10. The MDM12-MMM1 subcomplex functions in the major beta-barrel assembly pathway that is responsible for biogenesis of all mitochondrial outer membrane beta-barrel proteins, and acts in a late step after the SAM complex. The MDM10-MDM12-MMM1 subcomplex further acts in the TOM40-specific pathway after the action of the MDM12-MMM1 complex. Essential for establishing and maintaining the structure of mitochondria and maintenance of mtDNA nucleoids. The sequence is that of Mitochondrial distribution and morphology protein 12 from Ajellomyces dermatitidis (strain ER-3 / ATCC MYA-2586) (Blastomyces dermatitidis).